We begin with the raw amino-acid sequence, 233 residues long: UPF0173 metal-dependent hydrolase Acid345_3437 (233 aa).

The protein belongs to the UPF0173 family.

The polypeptide is UPF0173 metal-dependent hydrolase Acid345_3437 (Koribacter versatilis (strain Ellin345)).